Reading from the N-terminus, the 426-residue chain is D-tagatose-1,6-bisphosphate aldolase subunit KbaZ (426 aa).

This sequence belongs to the GatZ/KbaZ family. KbaZ subfamily. In terms of assembly, forms a complex with KbaY.

Its pathway is carbohydrate metabolism; D-tagatose 6-phosphate degradation; D-glyceraldehyde 3-phosphate and glycerone phosphate from D-tagatose 6-phosphate: step 2/2. In terms of biological role, component of the tagatose-1,6-bisphosphate aldolase KbaYZ that is required for full activity and stability of the Y subunit. Could have a chaperone-like function for the proper and stable folding of KbaY. When expressed alone, KbaZ does not show any aldolase activity. This Escherichia fergusonii (strain ATCC 35469 / DSM 13698 / CCUG 18766 / IAM 14443 / JCM 21226 / LMG 7866 / NBRC 102419 / NCTC 12128 / CDC 0568-73) protein is D-tagatose-1,6-bisphosphate aldolase subunit KbaZ.